Consider the following 233-residue polypeptide: MGRGRVELKRIENKINRQVTFAKRRNGLLKKAYELSVLCDAEVALIVFSNRGKLYEFCSTSCMNKTLERYQRCSYGSLETSQPSKETESSYQEYLKLKAKVDVLQRSHRNLLGEDLGELSTKELEQLEHQLDKSLRQIRSIKTQHMLDQLADLQKKEEMLFESNRALKTKLEESCASFRPNWDVRQPGDGFFEPLPLPCNNNLQIGYNEATQDQMNATTSAQNVHGFAQGWML.

Residues 3–58 (RGRVELKRIENKINRQVTFAKRRNGLLKKAYELSVLCDAEVALIVFSNRGKLYEFC) form the MADS-box domain. Residues 87–177 (TESSYQEYLK…KTKLEESCAS (91 aa)) enclose the K-box domain.

The protein localises to the nucleus. The sequence is that of MADS-box protein CMB1 (CMB1) from Dianthus caryophyllus (Carnation).